The sequence spans 488 residues: ATP synthase subunit beta (488 aa).

164–171 (GGAGVGKT) serves as a coordination point for ATP.

This sequence belongs to the ATPase alpha/beta chains family. In terms of assembly, F-type ATPases have 2 components, CF(1) - the catalytic core - and CF(0) - the membrane proton channel. CF(1) has five subunits: alpha(3), beta(3), gamma(1), delta(1), epsilon(1). CF(0) has four main subunits: a(1), b(1), b'(1) and c(9-12).

It is found in the cellular thylakoid membrane. The enzyme catalyses ATP + H2O + 4 H(+)(in) = ADP + phosphate + 5 H(+)(out). Produces ATP from ADP in the presence of a proton gradient across the membrane. The catalytic sites are hosted primarily by the beta subunits. This chain is ATP synthase subunit beta, found in Prochlorococcus marinus (strain NATL1A).